The primary structure comprises 75 residues: ATP synthase subunit c (75 aa).

Transmembrane regions (helical) follow at residues 4–24 (GLIA…GLGQ) and 54–74 (AVAE…MFAF).

The protein belongs to the ATPase C chain family. F-type ATPases have 2 components, F(1) - the catalytic core - and F(0) - the membrane proton channel. F(1) has five subunits: alpha(3), beta(3), gamma(1), delta(1), epsilon(1). F(0) has three main subunits: a(1), b(2) and c(10-14). The alpha and beta chains form an alternating ring which encloses part of the gamma chain. F(1) is attached to F(0) by a central stalk formed by the gamma and epsilon chains, while a peripheral stalk is formed by the delta and b chains.

The protein localises to the cell membrane. Its function is as follows. F(1)F(0) ATP synthase produces ATP from ADP in the presence of a proton or sodium gradient. F-type ATPases consist of two structural domains, F(1) containing the extramembraneous catalytic core and F(0) containing the membrane proton channel, linked together by a central stalk and a peripheral stalk. During catalysis, ATP synthesis in the catalytic domain of F(1) is coupled via a rotary mechanism of the central stalk subunits to proton translocation. Key component of the F(0) channel; it plays a direct role in translocation across the membrane. A homomeric c-ring of between 10-14 subunits forms the central stalk rotor element with the F(1) delta and epsilon subunits. This chain is ATP synthase subunit c, found in Mycoplasmopsis agalactiae (strain NCTC 10123 / CIP 59.7 / PG2) (Mycoplasma agalactiae).